Consider the following 641-residue polypeptide: MSVFRDLVEGECSEPNALGNFVQHFTNERSYHDKFEDHGKNEFYDSLYRHEEEYNEQRHLDSIFDGEGQEDDIHLMMDRHLNLRDGPREHKELPLSNVESDLQFLFQDFINSTRAGQLFHPSSLNHLPLTFEDKSKIKNRSSIMLKHFSNGESEQFEEDQLNRMLDSLGIEVGDDFDQVWDSQPHHTTTTTTTTTTTTTGQYDQYQKYVNDLPEEYEDYEQHQQELFDDGDLEDYELDEEWDKGDDFHPYDSAWTESDRSVEAAWDETARRTISDITRPITQINDPKLKKSNFMKFMNQLNSGEASIVGSDVVHNPDFKRQEEYQQQADQWTEDYNDFHEHIPQHRIQEYQFSIQEARDSDTLERGMGLFNEGHLSDSIIALESEVKRNPENAMAWMYLGIAHAENDQDSQATTCLIKSLQIDPTNSKARLALAVSHTNDYQKERALDTLEEWLQRTPEYTALYKQFKGSVDPNSFLDTWSRHEFTTNLFIEAARSRPSNPDPEVQTALGLLYNMSYDYDKAVDCFKAALQNSPTDYQLWNKLGATLANSNRSQEALGAYFKALEHKPSYVRARSNLGISYLSLNMFQESATTFLGAIAIHPAPNIWDNLKMVFRLMNREDLVQKADLRDVNAFLDEFQFM.

A Glycyl cysteine thioester (Cys-Gly) (interchain with G-Cter in ubiquitin) cross-link involves residue cysteine 12. Positions 12–34 (CSEPNALGNFVQHFTNERSYHDK) are amphipathic helix 1 (AH1). The amphipathic helix 2 (AH2) stretch occupies residues 74-92 (HLMMDRHLNLRDGPREHKE). Residues 261 to 288 (VEAAWDETARRTISDITRPITQINDPKL) are amphipathic helix 4 (AH4). The WxxxF/Y motif signature appears at 331 to 335 (WTEDY). TPR repeat units lie at residues 359 to 392 (DSDT…NPEN), 393 to 426 (AMAW…DPTN), 427 to 460 (SKAR…TPEY), 503 to 536 (PEVQ…SPTD), 538 to 570 (QLWN…KPSY), and 571 to 604 (VRAR…HPAP).

It belongs to the peroxisomal targeting signal receptor family. Interacts (via WxxxF/Y and LVxEF motifs) with PEX14; promoting translocation through the PEX13-PEX14 docking complex. Interacts with PEX7, promoting peroxisomal import of proteins containing a C-terminal PTS2-type peroxisomal targeting signal. Monoubiquitinated at Cys-12 by PEX2 during PEX5 passage through the retrotranslocation channel. Cys-12 monoubiquitination acts as a recognition signal for the PEX1-PEX6 complex and is required for PEX5 extraction and export from peroxisomes. When PEX5 recycling is compromised, polyubiquitinated by PEX10 during its passage through the retrotranslocation channel, leading to its degradation.

It localises to the cytoplasm. The protein localises to the cytosol. Its subcellular location is the peroxisome matrix. In terms of biological role, receptor that mediates peroxisomal import of proteins containing a C-terminal PTS1-type tripeptide peroxisomal targeting signal (SKL-type). Binds to cargo proteins containing a PTS1 peroxisomal targeting signal in the cytosol, and translocates them into the peroxisome matrix by passing through the PEX13-PEX14 docking complex along with cargo proteins. PEX5 receptor is then retrotranslocated into the cytosol, leading to release of bound cargo in the peroxisome matrix, and reset for a subsequent peroxisome import cycle. Its function is as follows. In addition to promoting peroxisomal translocation of proteins containing a PTS1 peroxisomal targeting signal, mediates peroxisomal import of proteins containing a C-terminal PTS2-type peroxisomal targeting signal via its interaction with PEX7. Interaction with PEX7 only takes place when PEX7 is associated with cargo proteins containing a PTS2 peroxisomal targeting signal. PEX7 along with PTS2-containing cargo proteins are then translocated through the PEX13-PEX14 docking complex together with PEX5. In Dictyostelium discoideum (Social amoeba), this protein is Peroxisomal targeting signal 1 receptor (pex5).